Here is a 371-residue protein sequence, read N- to C-terminus: Cytochrome b (371 aa).

A run of 4 helical transmembrane segments spans residues 24-44 (FGSMLLACLTLQITTGFFLAL), 68-89 (WTMQNLHSIGASMFFICIYIHI), 104-124 (WLSGITLLATLMATAFFGYVL), and 169-189 (FFALHFILPFAIVSLTSVHIV). Histidine 74 and histidine 88 together coordinate heme b. Histidine 173 and histidine 187 together coordinate heme b. Histidine 192 is an a ubiquinone binding site. Transmembrane regions (helical) follow at residues 217 to 237 (YKDTLMLTFMITTLFMIMSFA), 279 to 299 (LGGTLALVMSIAILMTMPFTH), 311 to 331 (LSQLMFWTLIATFITITWTAT), and 338 to 357 (FITIGQLTSILYFSFFMTNP).

Belongs to the cytochrome b family. In terms of assembly, the cytochrome bc1 complex contains 3 respiratory subunits (MT-CYB, CYC1 and UQCRFS1), 2 core proteins (UQCRC1 and UQCRC2) and probably 6 low-molecular weight proteins. It depends on heme b as a cofactor.

It localises to the mitochondrion inner membrane. Functionally, component of the ubiquinol-cytochrome c reductase complex (complex III or cytochrome b-c1 complex) that is part of the mitochondrial respiratory chain. The b-c1 complex mediates electron transfer from ubiquinol to cytochrome c. Contributes to the generation of a proton gradient across the mitochondrial membrane that is then used for ATP synthesis. The chain is Cytochrome b (MT-CYB) from Homoroselaps lacteus (Spotted harlequin snake).